The primary structure comprises 167 residues: Leptin (167 aa).

The N-terminal stretch at 1 to 21 is a signal peptide; sequence MRCGPLYQFLWLWPYLSYVEA. C117 and C167 form a disulfide bridge.

This sequence belongs to the leptin family.

The protein localises to the secreted. Its function is as follows. Key player in the regulation of energy balance and body weight control. Once released into the circulation, has central and peripheral effects by binding LEPR, found in many tissues, which results in the activation of several major signaling pathways. In the hypothalamus, acts as an appetite-regulating factor that induces a decrease in food intake and an increase in energy consumption by inducing anorexinogenic factors and suppressing orexigenic neuropeptides, also regulates bone mass and secretion of hypothalamo-pituitary-adrenal hormones. In the periphery, increases basal metabolism, influences reproductive function, regulates pancreatic beta-cell function and insulin secretion, is pro-angiogenic for endothelial cell and affects innate and adaptive immunity. In the arcuate nucleus of the hypothalamus, activates by depolarization POMC neurons inducing FOS and SOCS3 expression to release anorexigenic peptides and inhibits by hyperpolarization NPY neurons inducing SOCS3 with a consequent reduction on release of orexigenic peptides. In addition to its known satiety inducing effect, has a modulatory role in nutrient absorption. In the intestine, reduces glucose absorption by enterocytes by activating PKC and leading to a sequential activation of p38, PI3K and ERK signaling pathways which exerts an inhibitory effect on glucose absorption. Acts as a growth factor on certain tissues, through the activation of different signaling pathways increases expression of genes involved in cell cycle regulation such as CCND1, via JAK2-STAT3 pathway, or VEGFA, via MAPK1/3 and PI3K-AKT1 pathways. May also play an apoptotic role via JAK2-STAT3 pathway and up-regulation of BIRC5 expression. Pro-angiogenic, has mitogenic activity on vascular endothelial cells and plays a role in matrix remodeling by regulating the expression of matrix metalloproteinases (MMPs) and tissue inhibitors of metalloproteinases (TIMPs). In innate immunity, modulates the activity and function of neutrophils by increasing chemotaxis and the secretion of oxygen radicals. Increases phagocytosis by macrophages and enhances secretion of pro-inflammatory mediators. Increases cytotoxic ability of NK cells. Plays a pro-inflammatory role, in synergy with IL1B, by inducing NOS2 which promotes the production of IL6, IL8 and Prostaglandin E2, through a signaling pathway that involves JAK2, PI3K, MAP2K1/MEK1 and MAPK14/p38. In adaptive immunity, promotes the switch of memory T-cells towards T helper-1 cell immune responses. Increases CD4(+)CD25(-) T-cell proliferation and reduces autophagy during TCR (T-cell receptor) stimulation, through MTOR signaling pathway activation and BCL2 up-regulation. This Bubalus bubalis (Domestic water buffalo) protein is Leptin (LEP).